The sequence spans 444 residues: Trigger factor (444 aa).

Residues 166-251 form the PPIase FKBP-type domain; it reads GDQVVIDFKG…VKAVKAPKAA (86 aa).

This sequence belongs to the FKBP-type PPIase family. Tig subfamily.

The protein localises to the cytoplasm. The catalysed reaction is [protein]-peptidylproline (omega=180) = [protein]-peptidylproline (omega=0). In terms of biological role, involved in protein export. Acts as a chaperone by maintaining the newly synthesized protein in an open conformation. Functions as a peptidyl-prolyl cis-trans isomerase. The protein is Trigger factor of Cereibacter sphaeroides (strain KD131 / KCTC 12085) (Rhodobacter sphaeroides).